The following is a 351-amino-acid chain: MATNDEKSKALAAALGQIEKQFGKGAIMKLGDTQALDVESISTGSIGLDVALGIGGLPMGRVVEIFGPESSGKTTLTLSVIAQAQKAGKVCAFIDAEHALDPIYAAKLGVDVKELLVSQPDNGEQALEICDALVRSGAVDVIIVDSVAALTPKAEIEGDMGDSHVGLQARLMSQALRKLTGQIKNANCLVVFINQIRMKIGVMFGNPETTTGGNALKFYSSVRLDIRRVGAVKDGDEIIGNETRVKVVKNKLAPPFRQVDFQILYGEGISKNGELIELGVKHKLVDKSGAWYAYNGDKIGQGKANAMKWLAENPTVAAELENKIRAELLANPEQALLADIETNSEEKEDFE.

67–74 (GPESSGKT) is an ATP binding site.

This sequence belongs to the RecA family.

It localises to the cytoplasm. Its function is as follows. Can catalyze the hydrolysis of ATP in the presence of single-stranded DNA, the ATP-dependent uptake of single-stranded DNA by duplex DNA, and the ATP-dependent hybridization of homologous single-stranded DNAs. It interacts with LexA causing its activation and leading to its autocatalytic cleavage. In Mannheimia succiniciproducens (strain KCTC 0769BP / MBEL55E), this protein is Protein RecA.